The sequence spans 908 residues: Probable disease resistance RPP8-like protein 4 (908 aa).

Residues Asp15 to Arg57 are a coiled coil. An NB-ARC domain is found at Arg146–Ile459. Position 192–199 (Gly192–Thr199) interacts with ATP. LRR repeat units lie at residues Leu575 to Gly599, Leu600 to Leu623, and Met842 to Thr867.

Belongs to the disease resistance NB-LRR family. RPP8/HRT subfamily.

In terms of biological role, potential disease resistance protein. This chain is Probable disease resistance RPP8-like protein 4 (RPP8L4), found in Arabidopsis thaliana (Mouse-ear cress).